A 500-amino-acid polypeptide reads, in one-letter code: Cytochrome P450 11B2, mitochondrial (500 aa).

The N-terminal 24 residues, 1–24 (MALRAKADVWLARPWQCLPRTRAL), are a transit peptide targeting the mitochondrion. Phenylalanine 381 is a binding site for 21-hydroxyprogesterone. Heme is bound at residue cysteine 447.

This sequence belongs to the cytochrome P450 family. It depends on heme as a cofactor. As to expression, adrenal gland.

It localises to the mitochondrion inner membrane. The enzyme catalyses a steroid + 2 reduced [adrenodoxin] + O2 + 2 H(+) = an 11beta-hydroxysteroid + 2 oxidized [adrenodoxin] + H2O. The catalysed reaction is 21-hydroxyprogesterone + 2 reduced [adrenodoxin] + O2 + 2 H(+) = corticosterone + 2 oxidized [adrenodoxin] + H2O. It carries out the reaction corticosterone + 2 reduced [adrenodoxin] + O2 + 2 H(+) = 18-hydroxycorticosterone + 2 oxidized [adrenodoxin] + H2O. It catalyses the reaction 18-hydroxycorticosterone + 2 reduced [adrenodoxin] + O2 + 2 H(+) = aldosterone + 2 oxidized [adrenodoxin] + 2 H2O. The enzyme catalyses 11-deoxycortisol + 2 reduced [adrenodoxin] + O2 + 2 H(+) = cortisol + 2 oxidized [adrenodoxin] + H2O. The catalysed reaction is 21-hydroxyprogesterone + 2 reduced [adrenodoxin] + O2 + 2 H(+) = 18-hydroxy-11-deoxycorticosterone + 2 oxidized [adrenodoxin] + H2O. It carries out the reaction cortisol + 2 reduced [adrenodoxin] + O2 + 2 H(+) = 18-hydroxycortisol + 2 oxidized [adrenodoxin] + H2O. It catalyses the reaction 18-hydroxycortisol + 2 reduced [adrenodoxin] + O2 + 2 H(+) = 18-oxocortisol + 2 oxidized [adrenodoxin] + 2 H2O. It participates in steroid biosynthesis. A cytochrome P450 monooxygenase that catalyzes the biosynthesis of aldosterone, the main mineralocorticoid in the human body responsible for salt and water homeostasis, thus involved in blood pressure regulation, arterial hypertension, and the development of heart failure. Catalyzes three sequential oxidative reactions of 11-deoxycorticosterone (21-hydroxyprogesterone), namely 11-beta hydroxylation, followed by two successive oxidations at C18 yielding 18-hydroxy and then 18-oxo intermediates (that would not leave the enzyme active site during the consecutive hydroxylation reactions), ending with the formation of aldosterone. Can also produce 18-hydroxycortisol and 18-oxocortisol, derived from successive oxidations of cortisol at C18, normally found at very low levels, but significantly increased in primary aldosteronism, the most common form of secondary hypertension. Mechanistically, uses molecular oxygen inserting one oxygen atom into a substrate and reducing the second into a water molecule. Two electrons are provided by NADPH via a two-protein mitochondrial transfer system comprising flavoprotein FDXR (adrenodoxin/ferredoxin reductase) and nonheme iron-sulfur protein FDX1 or FDX2 (adrenodoxin/ferredoxin). Could also be involved in the androgen metabolic pathway. The protein is Cytochrome P450 11B2, mitochondrial (CYP11B2) of Mesocricetus auratus (Golden hamster).